We begin with the raw amino-acid sequence, 265 residues long: Indole-3-glycerol phosphate synthase (265 aa).

It belongs to the TrpC family.

The enzyme catalyses 1-(2-carboxyphenylamino)-1-deoxy-D-ribulose 5-phosphate + H(+) = (1S,2R)-1-C-(indol-3-yl)glycerol 3-phosphate + CO2 + H2O. The protein operates within amino-acid biosynthesis; L-tryptophan biosynthesis; L-tryptophan from chorismate: step 4/5. The polypeptide is Indole-3-glycerol phosphate synthase (Xanthomonas campestris pv. campestris (strain 8004)).